Here is a 1088-residue protein sequence, read N- to C-terminus: RNA-directed RNA polymerase (1088 aa).

One can recognise a RdRp catalytic domain in the interval 501–687; the sequence is LSYGDVTRFL…AKRYIAGGKI (187 aa).

It belongs to the reoviridae RNA-directed RNA polymerase family. As to quaternary structure, interacts with VP3 (Potential). Interacts with VP2; this interaction activates VP1. Interacts with NSP5; this interaction is probably necessary for the formation of functional virus factories. Interacts with NSP2; this interaction is weak. The cofactor is Mg(2+).

The protein localises to the virion. It catalyses the reaction RNA(n) + a ribonucleoside 5'-triphosphate = RNA(n+1) + diphosphate. Functionally, RNA-directed RNA polymerase that is involved in both transcription and genome replication. Together with VP3 capping enzyme, forms an enzyme complex positioned near the channels situated at each of the five-fold vertices of the core. Following infection, the outermost layer of the virus is lost, leaving a double-layered particle (DLP) made up of the core and VP6 shell. VP1 then catalyzes the transcription of fully conservative plus-strand genomic RNAs that are extruded through the DLP's channels into the cytoplasm where they function as mRNAs for translation of viral proteins. One copy of each of the viral (+)RNAs is also recruited during core assembly, together with newly synthesized polymerase complexes and VP2. The polymerase of these novo-formed particles catalyzes the synthesis of complementary minus-strands leading to dsRNA formation. To do so, the polymerase specifically recognizes and binds 4 bases 5'-UGUG-3' in the conserved 3'-sequence of plus-strand RNA templates. VP2 presumably activates the autoinhibited VP1-RNA complex to coordinate packaging and genome replication. Once dsRNA synthesis is complete, the polymerase switches to the transcriptional mode, thus providing secondary transcription. The protein is RNA-directed RNA polymerase of Rotavirus A (strain RVA/SA11-Patton/G3P[X]) (RV-A).